We begin with the raw amino-acid sequence, 654 residues long: Fructose-1,6-bisphosphatase class 3 (654 aa).

The protein belongs to the FBPase class 3 family. Mn(2+) serves as cofactor.

The catalysed reaction is beta-D-fructose 1,6-bisphosphate + H2O = beta-D-fructose 6-phosphate + phosphate. It participates in carbohydrate biosynthesis; gluconeogenesis. In Staphylococcus haemolyticus (strain JCSC1435), this protein is Fructose-1,6-bisphosphatase class 3.